We begin with the raw amino-acid sequence, 449 residues long: MDIEDVIAEVLQRIVPTKEEENFVSTLMEEIKEKTEETIEELNLDAKPYFVGSLAKDTYLAGDHDVDLFIAFPLDTSLEELREKGLELGKVLGERLGKYEIAYAEHPYVRAEYKGIRVDIVPCYNVKNWKDVRTAVDRSILHTHWVLENIKGKNNEVRLLKRFLKGINAYGSEIYIRGFSGYLAEILIIEFGSFLNVLEKSDFMLRKKIIDPEDWMKRESEITMKTIKREVGEDKPLIVIDPVDPRRNVAANLSWERYGLFYFKSQEFLKEPSTEFFFPRKKIGNYLSALRSRKTHLITLTFNPPKLVDDILLPQVERTAKGIKRQLELEGFKVLGYDYGREFIFLEVDRLEREGIKVKRGPLYFTQHGKRFYEKNDIVWIEGKELASEKPISTFIVDVLEEILRKGQFSAGKNIKDAIVKGDILVDFVPKELSKDAYLFLSREKFRVK.

ATP-binding residues include serine 53 and lysine 56. CTP-binding residues include serine 53 and lysine 56. Mg(2+)-binding residues include aspartate 65, aspartate 67, and aspartate 119. Residues histidine 142, lysine 161, and tyrosine 170 each coordinate ATP. Histidine 142, lysine 161, and tyrosine 170 together coordinate CTP.

It belongs to the tRNA nucleotidyltransferase/poly(A) polymerase family. Archaeal CCA-adding enzyme subfamily. As to quaternary structure, homodimer. The cofactor is Mg(2+).

It catalyses the reaction a tRNA precursor + 2 CTP + ATP = a tRNA with a 3' CCA end + 3 diphosphate. The enzyme catalyses a tRNA with a 3' CCA end + 2 CTP + ATP = a tRNA with a 3' CCACCA end + 3 diphosphate. In terms of biological role, catalyzes the addition and repair of the essential 3'-terminal CCA sequence in tRNAs without using a nucleic acid template. Adds these three nucleotides in the order of C, C, and A to the tRNA nucleotide-73, using CTP and ATP as substrates and producing inorganic pyrophosphate. tRNA 3'-terminal CCA addition is required both for tRNA processing and repair. Also involved in tRNA surveillance by mediating tandem CCA addition to generate a CCACCA at the 3' terminus of unstable tRNAs. While stable tRNAs receive only 3'-terminal CCA, unstable tRNAs are marked with CCACCA and rapidly degraded. The protein is CCA-adding enzyme of Pyrococcus horikoshii (strain ATCC 700860 / DSM 12428 / JCM 9974 / NBRC 100139 / OT-3).